Consider the following 382-residue polypeptide: Protein arginine N-methyltransferase 2 (382 aa).

ANK repeat units follow at residues 22-46 and 48-80; these read AAQTAAPSVLADLLAEGAPAWFQDD and LGWSCLHYAAERKEPECLEVLLQGGAVWNAVDK. The RMT2 domain maps to 134 to 382; the sequence is KTSAGDNLVF…RLPIAKMSLI (249 aa). S-adenosyl-L-methionine is bound by residues F143, M177, 205–210, 228–230, 255–256, and D284; these read FGLGIV, EAH, and WQ.

It belongs to the class I-like SAM-binding methyltransferase superfamily. RMT2 methyltransferase family. In terms of assembly, monomer.

The protein resides in the cytoplasm. Its subcellular location is the nucleus. S-adenosyl-L-methionine-dependent protein-arginine N-methyltransferase that methylates the delta-nitrogen atom of arginine residues to form N5-methylarginine (type IV) in target proteins. Monomethylates ribosomal protein L12. The sequence is that of Protein arginine N-methyltransferase 2 from Cryptococcus neoformans var. neoformans serotype D (strain JEC21 / ATCC MYA-565) (Filobasidiella neoformans).